The sequence spans 484 residues: Maintenance of mitochondrial morphology protein 1 (484 aa).

The Lumenal segment spans residues 1–22 (MSFQQSETVPVPAQSSLSFTQG). Residues 23–43 (FLLGQLSVVLLIGAFIKFFIF) form a helical membrane-spanning segment. The Cytoplasmic portion of the chain corresponds to 44–484 (GEAPPPPSRG…PGSLSGAAAR (441 aa)). Disordered stretches follow at residues 50–98 (PSRG…SSST), 272–319 (STPP…TGSP), and 388–484 (RTGV…AAAR). The span at 54–64 (LSHRASTHRRS) shows a compositional bias: basic residues. Polar residues-rich tracts occupy residues 65-78 (NSIY…ANNR) and 85-98 (SNSN…SSST). The SMP-LTD domain maps to 130–380 (QPESLDWFNV…EPRVQVVGLP (251 aa)). Pro residues predominate over residues 272-286 (STPPLHTPSPSPSPP). Positions 399–408 (TGSNAASRSA) are enriched in polar residues. Residues 413 to 427 (LGDHHLGDREPEGLR) show a composition bias toward basic and acidic residues. Polar residues-rich tracts occupy residues 437 to 449 (QFDS…SYNV) and 466 to 476 (GALSEQFQMPG).

Belongs to the MMM1 family. As to quaternary structure, homodimer. Component of the ER-mitochondria encounter structure (ERMES) or MDM complex, composed of mmm1, mdm10, mdm12 and mdm34. A mmm1 homodimer associates with one molecule of mdm12 on each side in a pairwise head-to-tail manner, and the SMP-LTD domains of mmm1 and mdm12 generate a continuous hydrophobic tunnel for phospholipid trafficking.

The protein resides in the endoplasmic reticulum membrane. In terms of biological role, component of the ERMES/MDM complex, which serves as a molecular tether to connect the endoplasmic reticulum (ER) and mitochondria. Components of this complex are involved in the control of mitochondrial shape and protein biogenesis, and function in nonvesicular lipid trafficking between the ER and mitochondria. The mdm12-mmm1 subcomplex functions in the major beta-barrel assembly pathway that is responsible for biogenesis of all outer membrane beta-barrel proteins, and acts in a late step after the SAM complex. The mdm10-mdm12-mmm1 subcomplex further acts in the TOM40-specific pathway after the action of the mdm12-mmm1 complex. Essential for establishing and maintaining the structure of mitochondria and maintenance of mtDNA nucleoids. This is Maintenance of mitochondrial morphology protein 1 from Aspergillus niger (strain ATCC MYA-4892 / CBS 513.88 / FGSC A1513).